A 371-amino-acid polypeptide reads, in one-letter code: Cytochrome b (371 aa).

4 helical membrane passes run 25 to 45 (FGSM…FLAV), 69 to 90 (WMMQ…YIHI), 105 to 125 (WMSG…GYVL), and 170 to 190 (FFAL…LHVI). Positions 75 and 89 each coordinate heme b. The heme b site is built by histidine 174 and histidine 188. An a ubiquinone-binding site is contributed by histidine 193. 4 consecutive transmembrane segments (helical) span residues 218-238 (HKDL…VSFF), 280-300 (LGGA…PFTH), 312-332 (LSQL…WAAT), and 339-358 (FITI…LSIP).

It belongs to the cytochrome b family. In terms of assembly, the cytochrome bc1 complex contains 3 respiratory subunits (MT-CYB, CYC1 and UQCRFS1), 2 core proteins (UQCRC1 and UQCRC2) and probably 6 low-molecular weight proteins. Heme b serves as cofactor.

It is found in the mitochondrion inner membrane. In terms of biological role, component of the ubiquinol-cytochrome c reductase complex (complex III or cytochrome b-c1 complex) that is part of the mitochondrial respiratory chain. The b-c1 complex mediates electron transfer from ubiquinol to cytochrome c. Contributes to the generation of a proton gradient across the mitochondrial membrane that is then used for ATP synthesis. This Liasis mackloti savuensis (Savu python) protein is Cytochrome b (MT-CYB).